We begin with the raw amino-acid sequence, 100 residues long: UPF0213 protein YhbQ (100 aa).

The region spanning 2–77 (TPWFLYLIRT…KQLTKRQKER (76 aa)) is the GIY-YIG domain.

Belongs to the UPF0213 family.

This Escherichia coli O17:K52:H18 (strain UMN026 / ExPEC) protein is UPF0213 protein YhbQ.